The chain runs to 385 residues: S-adenosylmethionine synthase (385 aa).

His15 serves as a coordination point for ATP. Asp17 contacts Mg(2+). Glu43 contributes to the K(+) binding site. Glu56 and Gln99 together coordinate L-methionine. The segment at 99–109 (QSPDINQGVDR) is flexible loop. ATP-binding positions include 164 to 166 (DAK), 230 to 231 (RF), Asp239, 245 to 246 (RK), Ala262, and Lys266. Asp239 lines the L-methionine pocket. Position 270 (Lys270) interacts with L-methionine.

It belongs to the AdoMet synthase family. In terms of assembly, homotetramer; dimer of dimers. Mg(2+) is required as a cofactor. Requires K(+) as cofactor.

It localises to the cytoplasm. The catalysed reaction is L-methionine + ATP + H2O = S-adenosyl-L-methionine + phosphate + diphosphate. The protein operates within amino-acid biosynthesis; S-adenosyl-L-methionine biosynthesis; S-adenosyl-L-methionine from L-methionine: step 1/1. Catalyzes the formation of S-adenosylmethionine (AdoMet) from methionine and ATP. The overall synthetic reaction is composed of two sequential steps, AdoMet formation and the subsequent tripolyphosphate hydrolysis which occurs prior to release of AdoMet from the enzyme. This Hamiltonella defensa subsp. Acyrthosiphon pisum (strain 5AT) protein is S-adenosylmethionine synthase.